The following is a 669-amino-acid chain: MERNDAERKIEKLRNQLEEYGYHYYVLDKPLVSDAEYDGLMNELIELEEAFPELKSDTSPSVRVGGPPLPHFEKVEHRTPMLSLGNAFSDQDLRDFDRRVRQVVGDEVTYSCELKIDGLAISLIYESGRFVRGATRGDGTTGEDITQNLRTIPSIPLRLKEAVSLEVRGEAFMPKRSFEALNEAKEAAGEERFANPRNAAAGSLRQLDPKLAAKRHLDAFIYAIGSVEGKELHSHHEGLNYLKTIGFKINPESAYCESIDEVIDYVNSWLERRADLPYEIDGIVIKVDNVNFQEQLGYTAKSPRWAIAYKFPAEEVITTLLDITLNVGRTGVVTPTAELKPVTVAGTTVKRASLHNEDLIREKDIRLGDSVVVKKAGDIIPEVVNVLTELRTGEERPFSMPTHCPECGSELVRLEGEVALRCINPQCPAQIREGLIHFVSRQAMNIDGLGEKVITQLFEHGLIHNVADLYKLNKDELLQLERMGEKSVNNLLASIETSKKSSLERLLFGLGIRFVGSKAAKTLAMHFPTMTELRRASYDELIAVNEIGEKMAASIVSYFEKPEVNELIDELASLGVNMTYNGPKPIGEEEIADSPFAGKTVVLTGKLQALTRGEAKEKIEALGGKVTGSVSKNTDLLVAGEDAGSKLTKAKELNIEIWDEEALVKAISH.

NAD(+)-binding positions include 34–38 (DAEYD), 83–84 (SL), and Glu113. The active-site N6-AMP-lysine intermediate is the Lys115. NAD(+)-binding residues include Arg136, Glu170, Lys286, and Lys310. Residues Cys404, Cys407, Cys422, and Cys427 each contribute to the Zn(2+) site. The BRCT domain maps to 591–669 (IADSPFAGKT…EEALVKAISH (79 aa)).

It belongs to the NAD-dependent DNA ligase family. LigA subfamily. It depends on Mg(2+) as a cofactor. Requires Mn(2+) as cofactor.

It catalyses the reaction NAD(+) + (deoxyribonucleotide)n-3'-hydroxyl + 5'-phospho-(deoxyribonucleotide)m = (deoxyribonucleotide)n+m + AMP + beta-nicotinamide D-nucleotide.. In terms of biological role, DNA ligase that catalyzes the formation of phosphodiester linkages between 5'-phosphoryl and 3'-hydroxyl groups in double-stranded DNA using NAD as a coenzyme and as the energy source for the reaction. It is essential for DNA replication and repair of damaged DNA. This is DNA ligase from Halalkalibacterium halodurans (strain ATCC BAA-125 / DSM 18197 / FERM 7344 / JCM 9153 / C-125) (Bacillus halodurans).